The chain runs to 52 residues: Alpha-1-antiproteinase 3 (52 aa).

The tract at residues 1-20 (EDLQGDAVPEEXATKDDNEH) is disordered.

It belongs to the serpin family. In terms of processing, N-glycosylated; contains glycans with bi- and triantennary side chains. Plasma.

The protein resides in the secreted. The protein is Alpha-1-antiproteinase 3 of Equus caballus (Horse).